A 207-amino-acid polypeptide reads, in one-letter code: Small ribosomal subunit protein uS4 (207 aa).

The segment at 31 to 51 is disordered; it reads KCKLDSKPGQHGRTSGARTSD. An S4 RNA-binding domain is found at 97 to 162; the sequence is SRLDNVVYRM…QGRIRESLDL (66 aa).

This sequence belongs to the universal ribosomal protein uS4 family. In terms of assembly, part of the 30S ribosomal subunit. Contacts protein S5. The interaction surface between S4 and S5 is involved in control of translational fidelity.

In terms of biological role, one of the primary rRNA binding proteins, it binds directly to 16S rRNA where it nucleates assembly of the body of the 30S subunit. With S5 and S12 plays an important role in translational accuracy. The polypeptide is Small ribosomal subunit protein uS4 (Bordetella bronchiseptica (strain ATCC BAA-588 / NCTC 13252 / RB50) (Alcaligenes bronchisepticus)).